A 306-amino-acid polypeptide reads, in one-letter code: Agmatinase (306 aa).

Residues histidine 126, aspartate 149, histidine 151, aspartate 153, aspartate 230, and aspartate 232 each contribute to the Mn(2+) site.

Belongs to the arginase family. Agmatinase subfamily. Requires Mn(2+) as cofactor.

The catalysed reaction is agmatine + H2O = urea + putrescine. Its pathway is amine and polyamine biosynthesis; putrescine biosynthesis via agmatine pathway; putrescine from agmatine: step 1/1. Catalyzes the formation of putrescine from agmatine. The protein is Agmatinase of Shigella boydii serotype 18 (strain CDC 3083-94 / BS512).